Reading from the N-terminus, the 180-residue chain is Required for excision 1-B domain-containing protein (180 aa).

Positions Met-1–Gly-23 are disordered.

In Bos taurus (Bovine), this protein is Required for excision 1-B domain-containing protein.